The following is a 339-amino-acid chain: Annexin A2 (339 aa).

Ser2 carries the post-translational modification N-acetylserine. Positions 2-24 (STVHEILCKLSLEGDHSTPPSAY) are S100A10-binding site. Tyr24 bears the Phosphotyrosine; by SRC mark. The residue at position 26 (Ser26) is a Phosphoserine; by PKC. Annexin repeat units follow at residues 33–104 (FDAE…GLLK) and 105–176 (TPAQ…ALAK). Position 49 is an N6-acetyllysine; alternate (Lys49). Lys49 is covalently cross-linked (Glycyl lysine isopeptide (Lys-Gly) (interchain with G-Cter in SUMO1); alternate). A Glycyl lysine isopeptide (Lys-Gly) (interchain with G-Cter in SUMO2); alternate cross-link involves residue Lys49. Lys152 bears the N6-acetyllysine mark. Ser184 carries the post-translational modification Phosphoserine. Annexin repeat units lie at residues 189–261 (ELID…NLVQ) and 265–336 (NKPL…YLCG). Tyr199 is subject to Phosphotyrosine. Lys227 carries the N6-acetyllysine modification.

Belongs to the annexin family. Heterotetramer containing 2 light chains of S100A10/p11 and 2 heavy chains of ANXA2/p36. Interacts with ATP1B1. Interacts with DYSF. Interacts with COCH. Interacts (via repeat Annexin 1) with PCSK9 (via the C-terminal domain); the interaction inhibits the degradation of LDLR. Interacts with CEACAM1 (via the cytoplasmic domain); this interaction is regulated by phosphorylation of CEACAM1. Interacts with APPL2 and APPL1; targets APPL2 to endosomes and acting in parallel to RAB5A. Interacts with S100A4. May interact with UBAP2. Interacts with PLEKHG4B; this interaction is required for PLEKHG4B localization to cell-cell adhesions. Interacts with FAM13A. Interacts with salivary cystatin-L2 (via loop 2) from the tick Ixodes scapularis; the interaction results in reduced activation of mouse NLRC4 inflammasome formation upon Anaplasma phagocytophilum infection. ISGylated.

It localises to the secreted. Its subcellular location is the extracellular space. It is found in the extracellular matrix. The protein localises to the basement membrane. The protein resides in the melanosome. It localises to the early endosome. Its function is as follows. Calcium-regulated membrane-binding protein whose affinity for calcium is greatly enhanced by anionic phospholipids. It binds two calcium ions with high affinity. May be involved in heat-stress response. Inhibits PCSK9-enhanced LDLR degradation, probably reduces PCSK9 protein levels via a translational mechanism but also competes with LDLR for binding with PCSK9. Binds to endosomes damaged by phagocytosis of particulate wear debris and participates in endosomal membrane stabilization, thereby limiting NLRP3 inflammasome activation. Required for endothelial cell surface plasmin generation and may support fibrinolytic surveillance and neoangiogenesis. In terms of biological role, (Microbial infection) Regulates the formation of the NLRC4 inflammasome triggered by Anaplasma phagocytophilum infection. Functionally, (Microbial infection) Protects against Klebsiella pneumoniae infection. Attenuates bacteria-induced pulmonary inflammation and promotes intro-abdominal pathogen clearance. Promotes anti-inflammatory responses by facilitating TLR4 internalization and translocation into early endosomal membranes; this leads to activation of TRAM-dependent endosomal signaling and release of anti-inflammatory cytokines. (Microbial infection) Promotes macrophage phagocytic efficiency towards Cryptococcus neoformans and ability to control fungal infection inside the cells. Its function is as follows. (Microbial infection) Contributes to protection against Pseudomonas aeruginosa infection by regulating autophagy via the AKT1-mTOR-ULK1/2 signaling pathway and activation of Rho GTPases via FAM13A-mediated mechanism. The sequence is that of Annexin A2 (Anxa2) from Mus musculus (Mouse).